The primary structure comprises 581 residues: Laccase-1 (581 aa).

The first 25 residues, 1–25 (MENLGFLIISTFLLLFTTLLPYSSA), serve as a signal peptide directing secretion. Plastocyanin-like domains follow at residues 34–150 (NVEW…PRQP) and 161–312 (EIPI…YTGK). Asn80 carries N-linked (GlcNAc...) asparagine glycosylation. The Cu cation site is built by His84, His86, His129, and His131. Residues Asn241, Asn300, Asn386, and Asn403 are each glycosylated (N-linked (GlcNAc...) asparagine). Residues 429–565 (DFPEKPPNRF…AMGFIVKDGP (137 aa)) enclose the Plastocyanin-like 3 domain. Cu cation contacts are provided by His482, His485, His487, His544, Cys545, His546, and His550.

Belongs to the multicopper oxidase family. Cu cation is required as a cofactor. In terms of tissue distribution, expressed in roots, stems and flowers.

Its subcellular location is the secreted. It is found in the extracellular space. It localises to the apoplast. It carries out the reaction 4 hydroquinone + O2 = 4 benzosemiquinone + 2 H2O. Functionally, lignin degradation and detoxification of lignin-derived products. The sequence is that of Laccase-1 (LAC1) from Arabidopsis thaliana (Mouse-ear cress).